Reading from the N-terminus, the 248-residue chain is ATP synthase subunit a, chloroplastic (248 aa).

Helical transmembrane passes span 38–58 (QVLITSWVVIAILLGSATIVV), 96–116 (VPFIGTMFLFIFVSNWSGALL), 135–155 (INTTVALALPTSVAYFYAGIS), 200–220 (LVVVVLVSLVPSLVPIPVMFL), and 221–241 (GLFTSGIQALIFATLAAAYIG).

This sequence belongs to the ATPase A chain family. As to quaternary structure, F-type ATPases have 2 components, CF(1) - the catalytic core - and CF(0) - the membrane proton channel. CF(1) has five subunits: alpha(3), beta(3), gamma(1), delta(1), epsilon(1). CF(0) has four main subunits: a, b, b' and c.

The protein localises to the plastid. It localises to the chloroplast thylakoid membrane. Functionally, key component of the proton channel; it plays a direct role in the translocation of protons across the membrane. This chain is ATP synthase subunit a, chloroplastic, found in Amborella trichopoda.